The primary structure comprises 219 residues: uncharacterized protein (219 aa).

At 1 to 15 (MLKLTTTSVTFHVLR) the chain is on the cytoplasmic side. A helical transmembrane segment spans residues 16 to 36 (YFQLGLSVTNLLLASFAIITN). At 37–41 (YKVDR) the chain is on the vacuolar side. The helical transmembrane segment at 42–62 (ILRLSLAVSIISSVYFGIVRF) threads the bilayer. Residue Leu-63 is a topological domain, cytoplasmic. A helical membrane pass occupies residues 64–84 (PVLLIFVMEIVQTVLWFTAFV). The Vacuolar portion of the chain corresponds to 85–116 (TLASKFGSMSCSSMPRGINFDYSGSCKIAKID). The helical transmembrane segment at 117-137 (ILPEAVLFILFLATTYASYIT) threads the bilayer. Topologically, residues 138–219 (VLSQAKENGS…VIDGSIEHSS (82 aa)) are cytoplasmic. The tract at residues 176-219 (PLLDLEVQEDARTETESIEDSTDSEDNANIEQEKVIDGSIEHSS) is disordered. The segment covering 191–203 (ESIEDSTDSEDNA) has biased composition (acidic residues). Over residues 206-219 (EQEKVIDGSIEHSS) the composition is skewed to basic and acidic residues.

The protein resides in the vacuole membrane. This is an uncharacterized protein from Saccharomyces cerevisiae (strain ATCC 204508 / S288c) (Baker's yeast).